Reading from the N-terminus, the 425-residue chain is Adenylosuccinate synthetase (425 aa).

GTP contacts are provided by residues 12–18 (GDEGKAK) and 40–42 (GHT). Catalysis depends on Asp-13, which acts as the Proton acceptor. The Mg(2+) site is built by Asp-13 and Gly-40. IMP is bound by residues 13–16 (DEGK), 38–41 (NAGH), Thr-130, Arg-144, Gln-224, Thr-239, and Arg-303. His-41 (proton donor) is an active-site residue. 299–305 (ATTGRPR) contributes to the substrate binding site. GTP is bound by residues Arg-305, 331–333 (KID), and 411–413 (STG).

Belongs to the adenylosuccinate synthetase family. As to quaternary structure, homodimer. It depends on Mg(2+) as a cofactor.

It is found in the cytoplasm. The catalysed reaction is IMP + L-aspartate + GTP = N(6)-(1,2-dicarboxyethyl)-AMP + GDP + phosphate + 2 H(+). It functions in the pathway purine metabolism; AMP biosynthesis via de novo pathway; AMP from IMP: step 1/2. Plays an important role in the de novo pathway of purine nucleotide biosynthesis. Catalyzes the first committed step in the biosynthesis of AMP from IMP. The polypeptide is Adenylosuccinate synthetase (Leptospira interrogans serogroup Icterohaemorrhagiae serovar copenhageni (strain Fiocruz L1-130)).